A 932-amino-acid chain; its full sequence is MGTNGGRPTKLSLVPLPKGSVLLPGATLRIPVSNRPDLANLLSSLLDRTNAIRRDANSITFGCVPLCSPYLSKDGQHVIDNGTVDEDKKEEFESLEAGQARKEDLYRYGTLGKVIGVQRRAYSEPHLLVQGVQRLTVRRVLRERPFFEAECILHDEKETPLNDRETAELFQQLRQLSRELLTLLRYTSLIPNTGGPRLSPLIARKFELIITKSDLAQAGRLADVMADIAESGLEDKLRVLAAFDVKTRLERVVDILNKQNQIIRGSVKFTTISTDNIPPASVLDISQIDPRIRDLLSRRGIPGASGTPPPGLGGRNNEADEKESNELDELQQRLKDAQLSPEAQKVADKEMRRLRKMMPVNQEYGVIRTYLENLADIPWTKVTEDKLGPETLKAARKQLDDDHYGLEKIKKRLLEYLAVLRLKQSTNQGLEQQISILTKELDNSGGDIEKDIPSLPESDRAAIESKLNALTSKRTVDKSPILLLVGPPGTGKTSLARSVATALGRKFHRISLGGVRDEAEIRGHRRTYVAAMPGVIVNGLKKVGVANPVFLLDEIDKIGGPNFQGDPSAAMLEVLDPEQNHTFVDHYINIPIDLSKVLFIATANSLDTIPAPLLDRMETIQLSGYTTVEKRHIAKRHLLPKQIRANGLSDGQVVLSDDVIDKTTTSYTRESGVRNLERELGSICRYKAVQFADATDSAKLESYNPVVTVDDLEEILGIERFDEEIAEKHGRPGVVTGLVAYSTGGQGSILFIEVADMPGSGRVQLTGKLGDVLKESVEVALTWVKAHSFELGLTSDPNEDIMKNRSLHVHCPSGAIPKDGPSAGLAHTIGLISLFSGKAVPPKLAMTGEVSLRGRVMPVGGIKEKLIGALRAGVTTVLLPHQNRKDVKDVPEEVSNGLEIIYVKHIWEAIRHIWPDAHWPGQHHMDFVESRL.

A Lon N-terminal domain is found at 11-260 (LSLVPLPKGS…RVVDILNKQN (250 aa)). Residues 298–328 (RRGIPGASGTPPPGLGGRNNEADEKESNELD) are disordered. Over residues 317 to 328 (NEADEKESNELD) the composition is skewed to basic and acidic residues. Residue 486–493 (GPPGTGKT) participates in ATP binding. One can recognise a Lon proteolytic domain in the interval 729-916 (HGRPGVVTGL…WEAIRHIWPD (188 aa)). Catalysis depends on residues serine 822 and lysine 865. Positions 930-932 (SRL) match the Microbody targeting signal motif.

The protein belongs to the peptidase S16 family.

It localises to the peroxisome matrix. The catalysed reaction is Hydrolysis of proteins in presence of ATP.. Functionally, ATP-dependent serine protease that mediates the selective degradation of misfolded and unassembled polypeptides in the peroxisomal matrix. Necessary for type 2 peroxisome targeting signal (PTS2)-containing protein processing and facilitates peroxisome matrix protein import. The polypeptide is Lon protease homolog 2, peroxisomal (Emericella nidulans (strain FGSC A4 / ATCC 38163 / CBS 112.46 / NRRL 194 / M139) (Aspergillus nidulans)).